Consider the following 219-residue polypeptide: Pyridoxine/pyridoxamine 5'-phosphate oxidase (219 aa).

Residues 13 to 16 (RVEY) and K76 each bind substrate. Residues 71–76 (RSVLCK), 86–87 (FT), K93, and Q115 each bind FMN. Substrate-binding residues include Y133, R137, and S141. FMN-binding positions include 150–151 (QS) and W196. 202 to 204 (RVH) is a substrate binding site. Position 206 (R206) interacts with FMN.

Belongs to the pyridoxamine 5'-phosphate oxidase family. Homodimer. The cofactor is FMN.

It catalyses the reaction pyridoxamine 5'-phosphate + O2 + H2O = pyridoxal 5'-phosphate + H2O2 + NH4(+). The enzyme catalyses pyridoxine 5'-phosphate + O2 = pyridoxal 5'-phosphate + H2O2. Its pathway is cofactor metabolism; pyridoxal 5'-phosphate salvage; pyridoxal 5'-phosphate from pyridoxamine 5'-phosphate: step 1/1. The protein operates within cofactor metabolism; pyridoxal 5'-phosphate salvage; pyridoxal 5'-phosphate from pyridoxine 5'-phosphate: step 1/1. Functionally, catalyzes the oxidation of either pyridoxine 5'-phosphate (PNP) or pyridoxamine 5'-phosphate (PMP) into pyridoxal 5'-phosphate (PLP). This chain is Pyridoxine/pyridoxamine 5'-phosphate oxidase, found in Mycobacterium leprae (strain TN).